Reading from the N-terminus, the 431-residue chain is Adenylosuccinate synthetase (431 aa).

Residues 13–19 and 41–43 each bind GTP; these read GDEGKGK and GHT. The Proton acceptor role is filled by Asp14. Mg(2+) is bound by residues Asp14 and Gly41. IMP is bound by residues 14–17, 39–42, Thr130, Arg144, Gln225, Thr240, and Arg304; these read DEGK and NAGH. Residue His42 is the Proton donor of the active site. Residue 300–306 participates in substrate binding; the sequence is ATTGRAR. GTP-binding positions include Arg306, 332–334, and 414–416; these read KLD and STG.

This sequence belongs to the adenylosuccinate synthetase family. As to quaternary structure, homodimer. The cofactor is Mg(2+).

It localises to the cytoplasm. It catalyses the reaction IMP + L-aspartate + GTP = N(6)-(1,2-dicarboxyethyl)-AMP + GDP + phosphate + 2 H(+). The protein operates within purine metabolism; AMP biosynthesis via de novo pathway; AMP from IMP: step 1/2. In terms of biological role, plays an important role in the de novo pathway of purine nucleotide biosynthesis. Catalyzes the first committed step in the biosynthesis of AMP from IMP. This is Adenylosuccinate synthetase from Chromohalobacter salexigens (strain ATCC BAA-138 / DSM 3043 / CIP 106854 / NCIMB 13768 / 1H11).